Here is a 494-residue protein sequence, read N- to C-terminus: UPF0371 protein M28_Spy1076 (494 aa).

The protein belongs to the UPF0371 family.

This is UPF0371 protein M28_Spy1076 from Streptococcus pyogenes serotype M28 (strain MGAS6180).